Consider the following 139-residue polypeptide: Plasmid stability protein StbB (139 aa).

The region spanning 2 to 136 is the PINc domain; the sequence is ILLDTNVISE…EAAGLNVINP (135 aa). Mg(2+) contacts are provided by aspartate 5 and aspartate 104.

It belongs to the PINc/VapC protein family. Mg(2+) serves as cofactor.

Toxic component of a type II toxin-antitoxin (TA) system. An RNase. Involved in plasmid stability. This is Plasmid stability protein StbB (stbB) from Pseudomonas syringae pv. tomato (strain ATCC BAA-871 / DC3000).